We begin with the raw amino-acid sequence, 251 residues long: ATP synthase subunit a 2 (251 aa).

The next 5 helical transmembrane spans lie at 35–55 (GQVFMASWVVIALLIIASLLA), 94–114 (LPFIGTLFLFIFVSNWSGSLI), 133–153 (INTTVALALLTSLAYFYAGLS), 198–218 (LVVAVLVFLVPLFVPLPLMAL), and 219–239 (GLFTSAIQALVFATLAGAYIH).

Belongs to the ATPase A chain family. F-type ATPases have 2 components, CF(1) - the catalytic core - and CF(0) - the membrane proton channel. CF(1) has five subunits: alpha(3), beta(3), gamma(1), delta(1), epsilon(1). CF(0) has four main subunits: a, b, b' and c.

The protein localises to the cellular thylakoid membrane. In terms of biological role, key component of the proton channel; it plays a direct role in the translocation of protons across the membrane. This Crocosphaera subtropica (strain ATCC 51142 / BH68) (Cyanothece sp. (strain ATCC 51142)) protein is ATP synthase subunit a 2.